Reading from the N-terminus, the 758-residue chain is MVRTKNQSSSSSASSSSTKSPIKSSSGAGSSGGGLGGRQSTHRSSSASNVAAVVAGGSSAAGGGSSSNRRSPGSSPDGDDDTTTTDDLTPTTCSPRSGHHHSYGGYSSSVHKQNLYVVSFPIIFLFNVLRSLIYQLFCIFRYLYGASTKVIYRPHRRDCNIEIVVQNSSKEQQQSLNHPSELNREGDGQEQQLSNQPQRFRPIQPLEMAANRPGGGYSPGPGDPLLAKQKHHHRRAFEYISKALKIDEENEGHKELAIELYRKGIKELEDGIAVDCWSGRGDVWDRAQRLHDKMQTNLSMARDRLHFLALREQDLQMQRLSLKEKQKEEAQSKPQKTREPMLAGMTNEPMKLRVRSSGYGPKATTSAQPTASGRKLTIGSKRPVNLAVANKSQTLPRNLGSKTSVGAVQRQPAKTAATPPAVRRQFSSGRNTPPQRSRTPINNNGPSGSGASTPVVSVKGVEQKLVQLILDEIVEGGAKVEWTDIAGQDVAKQALQEMVILPSVRPELFTGLRAPAKGLLLFGPPGNGKTLLARAVATECSATFLNISAASLTSKYVGDGEKLVRALFAVARHMQPSIIFIDEVDSLLSERSSSEHEASRRLKTEFLVEFDGLPGNPDGDRIVVLAATNRPQELDEAALRRFTKRVYVSLPDEQTRELLLNRLLQKQGSPLDTEALRRLAKITDGYSGSDLTALAKDAALEPIRELNVEQVKCLDISAMRAITEQDFHSSLKRIRRSVAPQSLNSYEKWSQDYGDITI.

A disordered region spans residues 1 to 103 (MVRTKNQSSS…SPRSGHHHSY (103 aa)). At 1–121 (MVRTKNQSSS…KQNLYVVSFP (121 aa)) the chain is on the cytoplasmic side. Positions 1–159 (MVRTKNQSSS…VIYRPHRRDC (159 aa)) are interaction with atl. Residues 1 to 210 (MVRTKNQSSS…RPIQPLEMAA (210 aa)) form a required for localization to punctate cytoplasmic foci region. Low complexity-rich tracts occupy residues 8 to 28 (SSSS…SSGA), 43 to 58 (RSSS…AGGS), 66 to 76 (SSNRRSPGSSP), and 85 to 95 (TDDLTPTTCSP). The segment at residues 122 to 142 (IIFLFNVLRSLIYQLFCIFRY) is an intramembrane region (helical). At 143–758 (LYGASTKVIY…WSQDYGDITI (616 aa)) the chain is on the cytoplasmic side. 2 stretches are compositionally biased toward polar residues: residues 169 to 180 (SKEQQQSLNHPS) and 189 to 198 (QEQQLSNQPQ). A disordered region spans residues 169 to 202 (SKEQQQSLNHPSELNREGDGQEQQLSNQPQRFRP). Positions 208-758 (MAANRPGGGY…WSQDYGDITI (551 aa)) are sufficient for interaction with microtubules and microtubule severing. Positions 233-308 (HRRAFEYISK…SMARDRLHFL (76 aa)) constitute an MIT domain. Residues 353–454 (RVRSSGYGPK…GPSGSGASTP (102 aa)) form a disordered region. Polar residues-rich tracts occupy residues 390–406 (NKSQ…TSVG) and 425–454 (QFSS…ASTP). Thr439 carries the phosphothreonine modification. Residues 443–455 (NNGPSGSGASTPV) are required for interaction with microtubules. 523–530 (GPPGNGKT) is a binding site for ATP.

It belongs to the AAA ATPase family. Spastin subfamily. Homohexamer. The homohexamer is stabilized by ATP-binding. The homohexamer may adopt a ring conformation through which microtubules pass prior to being severed. Interacts with microtubules. Interacts with atl; may be involved in microtubule dynamics.

The protein resides in the membrane. It localises to the cytoplasm. The protein localises to the cytoskeleton. Its subcellular location is the microtubule organizing center. It is found in the centrosome. The protein resides in the chromosome. It localises to the lipid droplet. It catalyses the reaction n ATP + n H2O + a microtubule = n ADP + n phosphate + (n+1) alpha/beta tubulin heterodimers.. Functionally, ATP-dependent microtubule severing protein. Stimulates microtubule minus-end depolymerization and poleward microtubule flux in the mitotic spindle. Regulates microtubule stability in the neuromuscular junction synapse. Involved in lipid metabolism by regulating the size and distribution of lipid droplets. Involved in axon regeneration by regulating microtubule severing. This chain is Spastin, found in Drosophila melanogaster (Fruit fly).